The primary structure comprises 366 residues: Probable methyltransferase-like protein 24 (366 aa).

An N-terminal signal peptide occupies residues 1–29; that stretch reads MARERPPGRGCGVLRRCLLGAVLLFGLRL. The segment at 36 to 110 is disordered; sequence AGPGSPTRSA…GRPRRKGPRW (75 aa). Positions 44 to 63 are enriched in pro residues; it reads SAPPGPAWRPPGPHLPPAPG. The span at 91–100 shows a compositional bias: low complexity; sequence TPEPGCCAPR.

Belongs to the methyltransferase superfamily.

It localises to the secreted. Functionally, probable methyltransferase. The protein is Probable methyltransferase-like protein 24 (METTL24) of Homo sapiens (Human).